We begin with the raw amino-acid sequence, 132 residues long: Ribosome-binding factor A (132 aa).

It belongs to the RbfA family. In terms of assembly, monomer. Binds 30S ribosomal subunits, but not 50S ribosomal subunits or 70S ribosomes.

The protein localises to the cytoplasm. In terms of biological role, one of several proteins that assist in the late maturation steps of the functional core of the 30S ribosomal subunit. Associates with free 30S ribosomal subunits (but not with 30S subunits that are part of 70S ribosomes or polysomes). Required for efficient processing of 16S rRNA. May interact with the 5'-terminal helix region of 16S rRNA. The sequence is that of Ribosome-binding factor A from Burkholderia lata (strain ATCC 17760 / DSM 23089 / LMG 22485 / NCIMB 9086 / R18194 / 383).